The following is a 1591-amino-acid chain: GATOR1 complex protein DEPDC5 (1591 aa).

3 disordered regions span residues glycine 427–isoleucine 455, leucine 478–isoleucine 532, and leucine 695–proline 720. The span at serine 430 to arginine 439 shows a compositional bias: basic and acidic residues. Low complexity predominate over residues serine 494–serine 508. Serine 505 is modified (phosphoserine). A compositionally biased stretch (polar residues) spans serine 518 to isoleucine 532. Residue serine 992 is modified to Phosphoserine. Disordered regions lie at residues serine 1040–serine 1064 and serine 1118–glutamine 1153. The segment covering serine 1118–tyrosine 1149 has biased composition (polar residues). Residues proline 1175–methionine 1250 enclose the DEP domain. The residue at position 1518 (serine 1518) is a Phosphoserine.

It belongs to the IML1 family. As to quaternary structure, within the GATOR complex, component of the GATOR1 subcomplex, made of DEPDC5, NPRL2 and NPRL3. GATOR1 mediates the strong interaction of the GATOR complex with small GTPases Rag (RagA/RRAGA, RagB/RRAGB, RagC/RRAGC and/or RagD/RRAGD) heterodimers. GATOR1 interacts with GPR155/LYCHOS; interaction takes place in presence of cholesterol and prevents interaction between GATOR1 and KICSTOR. Interacts with SAMTOR; interaction is direct and takes place in presence of methionine, leading to inhibit the activity of the GATOR1 complex. In terms of processing, phosphorylation at Ser-992 and Ser-1518 by AKT1 and PIM1 inhibit the activity of DEPDC5, releasing inhibition of the mTORC1 pathway. Post-translationally, ubiquitinated. Amino acid-induced 'Lys-48'-linked polyubiquitination of DEPDC5 by the BCR(KLHL22) ubiquitin ligase complex leads to DEPDC5 proteasomal degradation and inhibition of the GATOR1 complex. Ubiquitination may occur at multiple lysines. Expressed at low levels in all brain regions. Expressed throughout brain development, including in midgestation embryonic head (11.5 dpc), neonatal brain and whole adult brain. Present in neurons and absent in non-neuronal cells, including astrocytes (at protein level).

Its subcellular location is the lysosome membrane. The protein localises to the cytoplasm. It is found in the cytosol. It localises to the perinuclear region. In terms of biological role, as a component of the GATOR1 complex functions as an inhibitor of the amino acid-sensing branch of the mTORC1 pathway. In response to amino acid depletion, the GATOR1 complex has GTPase activating protein (GAP) activity and strongly increases GTP hydrolysis by RagA/RRAGA (or RagB/RRAGB) within heterodimeric Rag complexes, thereby turning them into their inactive GDP-bound form, releasing mTORC1 from lysosomal surface and inhibiting mTORC1 signaling. In the presence of abundant amino acids, the GATOR1 complex is negatively regulated by GATOR2, the other GATOR subcomplex, in this amino acid-sensing branch of the TORC1 pathway. Within the GATOR1 complex, DEPDC5 mediates direct interaction with the nucleotide-binding pocket of small GTPases Rag (RagA/RRAGA, RagB/RRAGB, RagC/RRAGC and/or RagD/RRAGD) and coordinates their nucleotide loading states by promoting RagA/RRAGA or RagB/RRAGB into their GDP-binding state and RagC/RRAGC or RagD/RRAGD into their GTP-binding state. However, it does not execute the GAP activity, which is mediated by NPRL2. The sequence is that of GATOR1 complex protein DEPDC5 from Mus musculus (Mouse).